Here is a 216-residue protein sequence, read N- to C-terminus: Deoxyribose-phosphate aldolase (216 aa).

The active-site Proton donor/acceptor is the Asp89. The active-site Schiff-base intermediate with acetaldehyde is the Lys153. The Proton donor/acceptor role is filled by Lys182.

It belongs to the DeoC/FbaB aldolase family. DeoC type 1 subfamily.

The protein localises to the cytoplasm. It carries out the reaction 2-deoxy-D-ribose 5-phosphate = D-glyceraldehyde 3-phosphate + acetaldehyde. The protein operates within carbohydrate degradation; 2-deoxy-D-ribose 1-phosphate degradation; D-glyceraldehyde 3-phosphate and acetaldehyde from 2-deoxy-alpha-D-ribose 1-phosphate: step 2/2. In terms of biological role, catalyzes a reversible aldol reaction between acetaldehyde and D-glyceraldehyde 3-phosphate to generate 2-deoxy-D-ribose 5-phosphate. In Treponema denticola (strain ATCC 35405 / DSM 14222 / CIP 103919 / JCM 8153 / KCTC 15104), this protein is Deoxyribose-phosphate aldolase.